The following is a 402-amino-acid chain: Oxysterol-binding protein 12 (402 aa).

The disordered stretch occupies residues 333–366; the sequence is NNNNDKETAEEKAKIEEKQRKEESERREKGILWE. Residues 336-366 show a composition bias toward basic and acidic residues; it reads NDKETAEEKAKIEEKQRKEESERREKGILWE.

Belongs to the OSBP family.

This chain is Oxysterol-binding protein 12 (osbL), found in Dictyostelium discoideum (Social amoeba).